A 479-amino-acid polypeptide reads, in one-letter code: 3-phytase B (479 aa).

Residues 1–19 (MPRTSLLTLACALATGASA) form the signal peptide. Intrachain disulfides connect C71-C387, C128-C472, C216-C441, C225-C298, and C413-C421. The active-site Nucleophile is the H82. N191 is a glycosylation site (N-linked (GlcNAc...) asparagine). N315 carries an N-linked (GlcNAc...) asparagine glycan. Residue D338 is the Proton donor of the active site. N-linked (GlcNAc...) asparagine glycosylation occurs at N458.

Belongs to the histidine acid phosphatase family. As to quaternary structure, homodimer.

It catalyses the reaction 1D-myo-inositol hexakisphosphate + H2O = 1D-myo-inositol 1,2,4,5,6-pentakisphosphate + phosphate. Catalyzes the hydrolysis of inorganic orthophosphate from phytate. This chain is 3-phytase B (phyB), found in Aspergillus awamori (Black koji mold).